We begin with the raw amino-acid sequence, 331 residues long: Probable allantoicase (331 aa).

The protein belongs to the allantoicase family.

The enzyme catalyses allantoate + H2O = (S)-ureidoglycolate + urea. The protein operates within nitrogen metabolism; (S)-allantoin degradation; (S)-ureidoglycolate from allantoate (aminidohydrolase route): step 1/1. This Pseudomonas fluorescens (strain SBW25) protein is Probable allantoicase.